The following is a 639-amino-acid chain: Far upstream element-binding protein 1 (639 aa).

Disordered regions lie at residues 1-27 (MADY…NDAF) and 40-88 (KIGG…LPPM). Ala2 bears the N-acetylalanine mark. The span at 14 to 23 (SAGGGGGGGV) shows a compositional bias: gly residues. Residues Ser48 and Ser51 each carry the phosphoserine modification. The span at 61 to 73 (RPLEDGDQPDAKK) shows a compositional bias: basic and acidic residues. KH domains lie at 95–159 (VMTE…KRLL), 180–246 (NAVQ…KEMV), and 270–334 (NEGI…AEII). A Phosphoserine modification is found at Ser135. Thr148 is subject to Phosphothreonine. Omega-N-methylarginine is present on residues Arg316, Arg354, Arg356, and Arg358. A disordered region spans residues 341–360 (VQAGNPGGPGPGGRGRGRGQ). Residues 345-360 (NPGGPGPGGRGRGRGQ) are compositionally biased toward gly residues. The KH 4 domain maps to 371–438 (LQEFNFIVPT…QQIDYARQLI (68 aa)). Thr427 bears the Phosphothreonine mark. Disordered regions lie at residues 442–527 (IGGP…GTDP) and 543–574 (QAQP…PAGQ). Pro residues predominate over residues 463-500 (PHGPPGPPGPGTPMGPYNPAPYNPGPPGPAPHGPPAPY). Residues 551-568 (PAGAPTTTQTNGQGDQQN) are compositionally biased toward low complexity. Ser625 carries the phosphoserine modification.

As to quaternary structure, found in a complex with PUF60 and far upstream element (FUSE) DNA segment. Interacts with PUF60 and JTV1. In terms of processing, ubiquitinated. This targets the protein for proteasome-mediated degradation.

The protein localises to the nucleus. Its function is as follows. Regulates MYC expression by binding to a single-stranded far-upstream element (FUSE) upstream of the MYC promoter. May act both as activator and repressor of transcription. The chain is Far upstream element-binding protein 1 from Rattus norvegicus (Rat).